The sequence spans 64 residues: Large ribosomal subunit protein bL35 (64 aa).

Residues 1 to 55 are disordered; it reads MPKMKTNKSVSARFKLTASGQLKRTRPGKRHKLSKKSSQEKRNLSKQPLVDKGQV. The segment covering 23-35 has biased composition (basic residues); the sequence is KRTRPGKRHKLSK.

Belongs to the bacterial ribosomal protein bL35 family.

In Chlamydia pneumoniae (Chlamydophila pneumoniae), this protein is Large ribosomal subunit protein bL35.